The primary structure comprises 400 residues: tRNA(Met) cytidine acetate ligase (400 aa).

Residues 7-20 (IVEY…HQYH), Gly101, Asn162, and Arg187 each bind ATP.

The protein belongs to the TmcAL family.

The protein localises to the cytoplasm. It catalyses the reaction cytidine(34) in elongator tRNA(Met) + acetate + ATP = N(4)-acetylcytidine(34) in elongator tRNA(Met) + AMP + diphosphate. Functionally, catalyzes the formation of N(4)-acetylcytidine (ac(4)C) at the wobble position of elongator tRNA(Met), using acetate and ATP as substrates. First activates an acetate ion to form acetyladenylate (Ac-AMP) and then transfers the acetyl group to tRNA to form ac(4)C34. This is tRNA(Met) cytidine acetate ligase from Oceanobacillus iheyensis (strain DSM 14371 / CIP 107618 / JCM 11309 / KCTC 3954 / HTE831).